The primary structure comprises 475 residues: Cobyric acid synthase (475 aa).

The 188-residue stretch at 244–431 (KLNVVVPVLT…LHGFFDEADV (188 aa)) folds into the GATase cobBQ-type domain. C325 acts as the Nucleophile in catalysis. The active site involves H423.

It belongs to the CobB/CobQ family. CobQ subfamily.

It functions in the pathway cofactor biosynthesis; adenosylcobalamin biosynthesis. Its function is as follows. Catalyzes amidations at positions B, D, E, and G on adenosylcobyrinic A,C-diamide. NH(2) groups are provided by glutamine, and one molecule of ATP is hydrogenolyzed for each amidation. This is Cobyric acid synthase from Vibrio campbellii (strain ATCC BAA-1116).